A 121-amino-acid chain; its full sequence is Large ribosomal subunit protein bL12 (121 aa).

Belongs to the bacterial ribosomal protein bL12 family. In terms of assembly, homodimer. Part of the ribosomal stalk of the 50S ribosomal subunit. Forms a multimeric L10(L12)X complex, where L10 forms an elongated spine to which 2 to 4 L12 dimers bind in a sequential fashion. Binds GTP-bound translation factors.

Its function is as follows. Forms part of the ribosomal stalk which helps the ribosome interact with GTP-bound translation factors. Is thus essential for accurate translation. The chain is Large ribosomal subunit protein bL12 from Pediococcus pentosaceus (strain ATCC 25745 / CCUG 21536 / LMG 10740 / 183-1w).